The primary structure comprises 372 residues: Probable basic-leucine zipper transcription factor G (372 aa).

Disordered regions lie at residues 1–20 (MLSV…QQQQ) and 176–234 (TTNN…EKFE). 2 stretches are compositionally biased toward low complexity: residues 11 to 20 (QQPQQQQQQQ) and 176 to 215 (TTNN…KSNT). Polar residues predominate over residues 223 to 234 (IRNSNSTFEKFE). The bZIP domain occupies 277 to 340 (ELKRQKRLIK…LILKAEVGQL (64 aa)). The basic motif stretch occupies residues 279-301 (KRQKRLIKNRESAHLSRQRKRER). A leucine-zipper region spans residues 305–340 (LEHRVEELSSNSIDINKTLSSLENENLILKAEVGQL).

This sequence belongs to the bZIP family.

Its subcellular location is the nucleus. Probable transcriptional regulator. The sequence is that of Probable basic-leucine zipper transcription factor G (bzpG) from Dictyostelium discoideum (Social amoeba).